A 66-amino-acid chain; its full sequence is Large ribosomal subunit protein bL35 (66 aa).

This sequence belongs to the bacterial ribosomal protein bL35 family.

The protein is Large ribosomal subunit protein bL35 of Thermomicrobium roseum (strain ATCC 27502 / DSM 5159 / P-2).